A 430-amino-acid polypeptide reads, in one-letter code: Delta-aminolevulinic acid dehydratase 1, chloroplastic (430 aa).

The transit peptide at 1-52 (MATTPIFNASCSFPSTRGIDCKSYIGLRSNVSKVSVASSRIATSQRRNLVVR) directs the protein to the chloroplast. The span at 82–91 (EAPPVPPKPA) shows a compositional bias: pro residues. Positions 82–101 (EAPPVPPKPAAPVGTPIIKP) are disordered. Lys298 serves as the catalytic Schiff-base intermediate with substrate. 5-aminolevulinate contacts are provided by Arg308 and Lys320. Position 336 (Glu336) interacts with Mg(2+). The active-site Schiff-base intermediate with substrate is the Lys351. Ser377 and Tyr416 together coordinate 5-aminolevulinate.

It belongs to the ALAD family. In terms of assembly, homooctamer. Requires Mg(2+) as cofactor. As to expression, highly expressed in cotyledons during dark-to-light transition.

It localises to the plastid. The protein localises to the chloroplast. It carries out the reaction 2 5-aminolevulinate = porphobilinogen + 2 H2O + H(+). The protein operates within porphyrin-containing compound metabolism; protoporphyrin-IX biosynthesis; coproporphyrinogen-III from 5-aminolevulinate: step 1/4. It participates in porphyrin-containing compound metabolism; chlorophyll biosynthesis. In terms of biological role, catalyzes an early step in the biosynthesis of tetrapyrroles. Binds two molecules of 5-aminolevulinate per subunit, each at a distinct site, and catalyzes their condensation to form porphobilinogen. This Arabidopsis thaliana (Mouse-ear cress) protein is Delta-aminolevulinic acid dehydratase 1, chloroplastic (HEMB1).